The following is a 428-amino-acid chain: MEHLLKTDPEVFDAVVKEYERQFYNLEMIASENFTSLAVMEATGSVLTNKYAEGLPGKRYYGGCEYVDVVENLAIERAKKLFGAEHANVQPHSGSQANMAVYFAVLNPGDTIMGMDLAHGGHLTHGAKVNFSGKLYNVIHYGVNPETELIDYDQLYKLAKEHKPKLIVGGASAYPRVFDWAKMREIADEVGALFMVDMAHYAGLIAGGVYPNPVPYAQFVTSTTHKTLRGPRSGFILTTKEYAKAVDKSVFPGIQGGPLMHVIAAKAVAFKEAMSEEFKEYAKQVVENARVLAEELKKYGFKIVTGGTDSHIVLVDLRNKNIIGKDAEKALEKAGITVNKNAVPFDPLPPTKTSGIRIGTAALTTRGMKEDEMRKIAGWINEVLSNMDDEKTIQRVRQEVRELCETFPLYPELKRRIDELRSGKATDL.

(6S)-5,6,7,8-tetrahydrofolate contacts are provided by residues leucine 117 and 121–123 (GHL). Position 226 is an N6-(pyridoxal phosphate)lysine (lysine 226).

Belongs to the SHMT family. As to quaternary structure, homodimer. The cofactor is pyridoxal 5'-phosphate.

It is found in the cytoplasm. The enzyme catalyses (6R)-5,10-methylene-5,6,7,8-tetrahydrofolate + glycine + H2O = (6S)-5,6,7,8-tetrahydrofolate + L-serine. It participates in one-carbon metabolism; tetrahydrofolate interconversion. It functions in the pathway amino-acid biosynthesis; glycine biosynthesis; glycine from L-serine: step 1/1. In terms of biological role, catalyzes the reversible interconversion of serine and glycine with tetrahydrofolate (THF) serving as the one-carbon carrier. This reaction serves as the major source of one-carbon groups required for the biosynthesis of purines, thymidylate, methionine, and other important biomolecules. Also exhibits THF-independent aldolase activity toward beta-hydroxyamino acids, producing glycine and aldehydes, via a retro-aldol mechanism. The protein is Serine hydroxymethyltransferase of Aquifex aeolicus (strain VF5).